Consider the following 424-residue polypeptide: Tyrosine--tRNA ligase (424 aa).

Tyr-37 lines the L-tyrosine pocket. A 'HIGH' region motif is present at residues 42–51 (PTADSLHLGH). Residues Tyr-175 and Gln-179 each contribute to the L-tyrosine site. The short motif at 235-239 (KFGKT) is the 'KMSKS' region element. Residue Lys-238 participates in ATP binding. In terms of domain architecture, S4 RNA-binding spans 357 to 414 (ADLQQALVAAELVPSRGQARTLISSNAVSVNGEKQASIDYVFDDADRLYSRYTLLRRG).

This sequence belongs to the class-I aminoacyl-tRNA synthetase family. TyrS type 1 subfamily. Homodimer.

The protein localises to the cytoplasm. The enzyme catalyses tRNA(Tyr) + L-tyrosine + ATP = L-tyrosyl-tRNA(Tyr) + AMP + diphosphate + H(+). In terms of biological role, catalyzes the attachment of tyrosine to tRNA(Tyr) in a two-step reaction: tyrosine is first activated by ATP to form Tyr-AMP and then transferred to the acceptor end of tRNA(Tyr). The polypeptide is Tyrosine--tRNA ligase (Sodalis glossinidius (strain morsitans)).